A 508-amino-acid chain; its full sequence is MELLDKAVTDFQLFYQKILDLYESDFSPADKWTEIATHIHDNQQIPIGIYKLLRQNDTVNQIDIDYKSDLEQLNSKISLESDFIVKSSLIIASMHFIIYDMITREGNYSSIMYGSEEMNIPSVHNMIYYVYISTKNQQNIYFHAYILLFGLESIFNKKFYVGMDFEFTNKKIQLSQLNFEHNVSTKSIIMIVSPNELEDIMMNNFIKIIICNTNIKKILHGSDSLDIPYMYTHRLDGDPDKIIKFTRTLIDTRFLCEYYKLNSDIVSDNRCSIYDEDPSRSAVYFFKVISDEQQNKLAELLESMPAPHDIQWNIHKMPISQARYAAYDVLYLKVFYYRIIHVATEEDSSDIGKKNIIELYKHLLNEITRFVYLEQNGITLLMAKCKEEVDVVNNYFIRNSEGITKMIDIFNQVSLGLETSDPKVNVDSFSKVNHFKRPITTIIKRIVYGFISYRCRIYKDKSTIWTDKLDNQFIFDFLAKMKFNYLNKMFKELSKTLESRIVAICSVR.

The protein localises to the virion. This is an uncharacterized protein from Acanthamoeba polyphaga mimivirus (APMV).